A 466-amino-acid polypeptide reads, in one-letter code: 23S rRNA (uracil(1939)-C(5))-methyltransferase RlmD (466 aa).

The TRAM domain maps to methionine 1–glutamate 54. [4Fe-4S] cluster contacts are provided by cysteine 67, cysteine 73, cysteine 76, and cysteine 155. Glutamine 264, phenylalanine 293, asparagine 298, glutamate 314, asparagine 342, and aspartate 363 together coordinate S-adenosyl-L-methionine. Cysteine 393 functions as the Nucleophile in the catalytic mechanism.

Belongs to the class I-like SAM-binding methyltransferase superfamily. RNA M5U methyltransferase family. RlmD subfamily.

It carries out the reaction uridine(1939) in 23S rRNA + S-adenosyl-L-methionine = 5-methyluridine(1939) in 23S rRNA + S-adenosyl-L-homocysteine + H(+). Functionally, catalyzes the formation of 5-methyl-uridine at position 1939 (m5U1939) in 23S rRNA. This chain is 23S rRNA (uracil(1939)-C(5))-methyltransferase RlmD, found in Bordetella pertussis (strain Tohama I / ATCC BAA-589 / NCTC 13251).